Reading from the N-terminus, the 245-residue chain is tRNA (guanine-N(1)-)-methyltransferase (245 aa).

S-adenosyl-L-methionine contacts are provided by residues Gly113 and 133-138 (IGDYVL).

This sequence belongs to the RNA methyltransferase TrmD family. In terms of assembly, homodimer.

The protein resides in the cytoplasm. The enzyme catalyses guanosine(37) in tRNA + S-adenosyl-L-methionine = N(1)-methylguanosine(37) in tRNA + S-adenosyl-L-homocysteine + H(+). Specifically methylates guanosine-37 in various tRNAs. The polypeptide is tRNA (guanine-N(1)-)-methyltransferase (Histophilus somni (strain 129Pt) (Haemophilus somnus)).